The sequence spans 397 residues: Proteinase-activated receptor 2 (397 aa).

The first 25 residues, 1-25 (MRSLSLAWLLGGITLLAASASCNRT), serve as a signal peptide directing secretion. N23 carries an N-linked (GlcNAc...) asparagine glycan. The propeptide at 26 to 36 (VNAPGPNSKGR) is removed for receptor activation. The Extracellular portion of the chain corresponds to 37–71 (SLIGRLDTPPPITGKGAPVEPGFSVDEFSASVLTG). A helical transmembrane segment spans residues 72-101 (KLTTVFLPVIYIIVFVIGLPSNGMALWVFF). Residues 102–108 (FRTKKKH) are Cytoplasmic-facing. Residues 109-137 (PAVIYMANLALADLLSVIWFPLKISYHLH) form a helical membrane-spanning segment. Topologically, residues 138 to 149 (GNDWTYGDALCK) are extracellular. C148 and C226 are joined by a disulfide. The chain crosses the membrane as a helical span at residues 150–177 (VLIGFFYGNMYCSILFMTCLSVQRYWVI). The Cytoplasmic portion of the chain corresponds to 178-183 (VNPMGH). A helical transmembrane segment spans residues 184 to 211 (SRKRANIAVGVSLAIWLLIFLVTIPLYV). The Extracellular portion of the chain corresponds to 212 to 235 (MRQTIYIPALNITTCHDVLPEEVL). N222 is a glycosylation site (N-linked (GlcNAc...) asparagine). Residues 236 to 269 (VGDMFSYFLSLAIGVFLFPALLTASAYVLMIKTL) form a helical membrane-spanning segment. Topologically, residues 270-277 (RSSAMDEH) are cytoplasmic. Residues 278 to 317 (SEKKRRRAIRLIITVLSMYFICFAPSNVLLVVHYFLIKSQ) traverse the membrane as a helical segment. Over 318–323 (RQSHVY) the chain is Extracellular. Residues 324–347 (ALYLVALCLSTLNSCIDPFVYYFV) traverse the membrane as a helical segment. The Cytoplasmic portion of the chain corresponds to 348 to 397 (SKDFRDQARNALLCRSVRTVKRMQISLTSNKFSRKSSSYSSSSTSVKTSY). The S-palmitoyl cysteine moiety is linked to residue C361.

This sequence belongs to the G-protein coupled receptor 1 family. As to quaternary structure, interacts with TLR4, COPS5 and TMED2. Interacts with GNAQ, GNA11, GNA12, GNA13 and GNA14. A proteolytic cleavage generates a new N-terminus that functions as a tethered ligand. Activating serine proteases include trypsin, mast cell tryptase, coagulation factors VII and Xa, myeloblastin/PRTN3 and membrane-type serine protease 1/ST14. Proposed subsequent cleavage by serine proteases is leading to receptor deactivation and include neutrophil elastase and cathepsin G. At least in part, implicated proteases are also shown to activate the receptor; the glycosylation status of the receptor is thought to contribute to the difference. In terms of processing, N-glycosylated and sialylated. Post-translationally, multiple phosphorylated on serine and threonine residues in the cytoplasmic region upon receptor activation; required for receptor desensitization and recruitment of beta-arrestin. Monoubiquitinated by Cbl at the plasma membrane and in early endosomes; not required for receptor endocytosis but for translocation to late endosomes or lysosomes. Deubiquitination involves Stambp and Usp8; required for lysosomal trafficking and receptor degradation.

Its subcellular location is the cell membrane. Functionally, receptor for trypsin and trypsin-like enzymes coupled to G proteins. Its function is mediated through the activation of several signaling pathways including phospholipase C (PLC), intracellular calcium, mitogen-activated protein kinase (MAPK), I-kappaB kinase/NF-kappaB and Rho. Can also be transactivated by cleaved F2R/PAR1. Involved in modulation of inflammatory responses and regulation of innate and adaptive immunity, and acts as a sensor for proteolytic enzymes generated during infection. Generally is promoting inflammation. Can signal synergistically with TLR4 and probably TLR2 in inflammatory responses and modulates Tlr3 signaling. Has a protective role in establishing the endothelial barrier; the activity involves coagulation factor X. Regulates endothelial cell barrier integrity during neutrophil extravasation, probably following proteolytic cleavage by PRTN3. Proposed to have a bronchoprotective role in airway epithelium, but also shown to compromise the airway epithelial barrier by interrupting E-cadherin adhesion. Involved in the regulation of vascular tone; activation results in hypotension presumably mediated by vasodilation. Associates with a subset of G proteins alpha subunits such as GNAQ, GNA11, GNA14, GNA12 and GNA13, but probably not with G(o)-alpha, G(i) subunit alpha-1 and G(i) subunit alpha-2. Believed to be a class B receptor which internalizes as a complex with arrestin and traffic with it to endosomal vesicles, presumably as desensitized receptor, for extended periods of time. Mediates inhibition of TNF-alpha stimulated JNK phosphorylation via coupling to G GNAQ and GNA11; the function involves dissociation of RIPK1 and Tradd from TNFR1. Mediates phosphorylation of nuclear factor NF-kappa-B RELA subunit at 'Ser-536'; the function involves Ikbkb and is predominantly independent of G proteins. Involved in cellular migration. Involved in cytoskeletal rearrangement and chemotaxis through beta-arrestin-promoted scaffolds; the function is independent of GNAQ and GNA11 and involves promotion of cofilin dephosphorylation and actin filament severing. Induces redistribution of COPS5 from the plasma membrane to the cytosol and activation of the JNK cascade is mediated by Cops5. Involved in the recruitment of leukocytes to the sites of inflammation and is the major PAR receptor capable of modulating eosinophil function such as pro-inflammatory cytokine secretion, superoxide production and degranulation. During inflammation promotes dendritic cell maturation, trafficking to the lymph nodes and subsequent T-cell activation. Involved in antimicrobial response of innate immune cells; activation enhances phagocytosis of Gram-positive and killing of Gram-negative bacteria. Acts synergistically with interferon-gamma in enhancing antiviral responses. Probably mediates activation of pro-inflammatory and pro-fibrotic responses in fibroblasts, triggered by coagulation factor Xa (F10). Probably mediates activation of barrier protective signaling responses in endothelial cells, triggered by coagulation factor Xa (F10). This Rattus norvegicus (Rat) protein is Proteinase-activated receptor 2 (F2rl1).